The following is a 335-amino-acid chain: Protein-arginine kinase (335 aa).

One can recognise a Phosphagen kinase C-terminal domain in the interval 20 to 243 (IVMSSRIRLA…QQIINEEMQI (224 aa)). ATP contacts are provided by residues 23–27 (SSRIR), His81, Arg114, 165–169 (RASVM), and 196–201 (RGIYGE).

Belongs to the ATP:guanido phosphotransferase family.

The catalysed reaction is L-arginyl-[protein] + ATP = N(omega)-phospho-L-arginyl-[protein] + ADP + H(+). Functionally, catalyzes the specific phosphorylation of arginine residues in proteins. The protein is Protein-arginine kinase of Staphylococcus haemolyticus (strain JCSC1435).